Here is a 179-residue protein sequence, read N- to C-terminus: Large ribosomal subunit protein uL6 (179 aa).

Belongs to the universal ribosomal protein uL6 family. In terms of assembly, part of the 50S ribosomal subunit.

This protein binds to the 23S rRNA, and is important in its secondary structure. It is located near the subunit interface in the base of the L7/L12 stalk, and near the tRNA binding site of the peptidyltransferase center. The polypeptide is Large ribosomal subunit protein uL6 (Mycobacterium ulcerans (strain Agy99)).